Here is a 915-residue protein sequence, read N- to C-terminus: Transferrin-binding protein A (915 aa).

An N-terminal signal peptide occupies residues 1-24; that stretch reads MQQQHLFRLNILCLSLMTALPAYA. Residues 38–45 carry the TonB box motif; it reads DTIQVKAK. Positions 51 to 176 constitute a TBDR plug domain; it reads RDNEVTGLGK…LAGSVAFQTK (126 aa). The TBDR beta-barrel domain occupies 187–915; it reads QWGIQSKTAY…NYTFSLEMKF (729 aa). Over residues 526–540 the composition is skewed to polar residues; the sequence is LKTPPQNNGKKTSPN. A disordered region spans residues 526-545; the sequence is LKTPPQNNGKKTSPNGREKN. The short motif at 898 to 915 is the TonB C-terminal box element; sequence NRYAAPGRNYTFSLEMKF.

This sequence belongs to the TonB-dependent receptor family. Binds both human apo- and holo-transferrin (TF), via the TF C-terminus. Forms a large complex with TF and TbpB.

The protein resides in the cell outer membrane. In terms of biological role, neisseria acquires iron by extracting it from serum transferrin (TF) in its human host. Acts as a TF receptor and is required for TF utilization. Binds both apo- and holo-TF, via the TF C-terminus. The chain is Transferrin-binding protein A from Neisseria gonorrhoeae.